The sequence spans 341 residues: Very-long-chain 3-oxoacyl-CoA reductase (341 aa).

A helical transmembrane segment spans residues 22-42; that stretch reads AVTGFLLVGIASFAAPLISTI. Positions 67, 123, 131, 150, 217, 221, 250, and 252 each coordinate NADP(+). The Proton donor role is filled by tyrosine 217. Lysine 221 serves as the catalytic Lowers pKa of active site Tyr.

It belongs to the short-chain dehydrogenases/reductases (SDR) family.

The protein localises to the endoplasmic reticulum membrane. It carries out the reaction a very-long-chain (3R)-3-hydroxyacyl-CoA + NADP(+) = a very-long-chain 3-oxoacyl-CoA + NADPH + H(+). It functions in the pathway lipid metabolism; fatty acid biosynthesis. In terms of biological role, component of the microsomal membrane bound fatty acid elongation system, which produces the 26-carbon very long-chain fatty acids (VLCFA) from palmitate. Catalyzes the reduction of the 3-ketoacyl-CoA intermediate that is formed in each cycle of fatty acid elongation. VLCFAs serve as precursors for ceramide and sphingolipids. This chain is Very-long-chain 3-oxoacyl-CoA reductase, found in Pyrenophora tritici-repentis (strain Pt-1C-BFP) (Wheat tan spot fungus).